The following is a 1653-amino-acid chain: Ciliary rootlet coiled-coil protein 2 (1653 aa).

The segment covering 1-17 (MSSASSEPGNGDASQQP) has biased composition (polar residues). Residues 1 to 57 (MSSASSEPGNGDASQQPLLGLDTVIQRLEDTILSPTASREDRALTVRGEGRQASPTP) form a disordered region. Residues 38 to 50 (SREDRALTVRGEG) show a composition bias toward basic and acidic residues. Coiled coils occupy residues 86 to 145 (VARV…SELE) and 310 to 351 (KVAL…LVAQ). The tract at residues 367–396 (LGEPRRPLRSPQRATSPHQGASPPHICSPA) is disordered. Residues 423-1215 (LKSSQALVAS…QRKLAEVEAA (793 aa)) are a coiled coil. The disordered stretch occupies residues 1302–1356 (GLQRQSPWASPEQPGSPTKGSDSSQALPGQQGTSPPARPHSPLRWPSPTPGGRSS). Positions 1304–1335 (QRQSPWASPEQPGSPTKGSDSSQALPGQQGTS) are enriched in polar residues. Positions 1361–1570 (VATVQDILRD…QAQMTEMEQA (210 aa)) form a coiled coil.

The protein belongs to the rootletin family.

The polypeptide is Ciliary rootlet coiled-coil protein 2 (Homo sapiens (Human)).